The primary structure comprises 203 residues: Thymidylate kinase (203 aa).

An ATP-binding site is contributed by 10–17; sequence GIDGAGKS.

Belongs to the thymidylate kinase family.

It carries out the reaction dTMP + ATP = dTDP + ADP. Its function is as follows. Phosphorylation of dTMP to form dTDP in both de novo and salvage pathways of dTTP synthesis. The polypeptide is Thymidylate kinase (Cupriavidus necator (strain ATCC 17699 / DSM 428 / KCTC 22496 / NCIMB 10442 / H16 / Stanier 337) (Ralstonia eutropha)).